Here is a 447-residue protein sequence, read N- to C-terminus: Probable glycosyltransferase 7 (447 aa).

A disordered region spans residues 1 to 31 (MRATTGARHLHPPWRRGLRHHRQSTMPPRAS). Residues 1 to 37 (MRATTGARHLHPPWRRGLRHHRQSTMPPRASRGRLAD) lie on the Cytoplasmic side of the membrane. The span at 8-23 (RHLHPPWRRGLRHHRQ) shows a compositional bias: basic residues. A helical; Signal-anchor for type II membrane protein transmembrane segment spans residues 38–60 (AALFTAGAVLGSVLLLTLASPFS). At 61 to 447 (SSSSPSSGVG…LPFDHPTQTA (387 aa)) the chain is on the lumenal side. N-linked (GlcNAc...) asparagine glycosylation is found at Asn285 and Asn329.

This sequence belongs to the glycosyltransferase 34 family.

It is found in the golgi apparatus membrane. In terms of biological role, probable glycosyltransferase that may be involved in the biosynthesis of xyloglucan. This is Probable glycosyltransferase 7 from Oryza sativa subsp. indica (Rice).